A 262-amino-acid chain; its full sequence is ATP synthase subunit a (262 aa).

The next 6 helical transmembrane spans lie at 50–70 (TMIMTWITMALVLLFAWACTK), 107–127 (MMPIIVTFFIYIVFANLLGLI), 141–161 (FGLALIVVLLIHYHGLKANGV), 194–214 (LYGNIFAGEVLIAVLLGLINI), 218–238 (VFGGFIPSVIWLAFSVFVGFV), and 239–259 (QAFVFSMLTIAYVSQFAAHEA).

It belongs to the ATPase A chain family. As to quaternary structure, F-type ATPases have 2 components, CF(1) - the catalytic core - and CF(0) - the membrane proton channel. CF(1) has five subunits: alpha(3), beta(3), gamma(1), delta(1), epsilon(1). CF(0) has three main subunits: a(1), b(2) and c(9-12). The alpha and beta chains form an alternating ring which encloses part of the gamma chain. CF(1) is attached to CF(0) by a central stalk formed by the gamma and epsilon chains, while a peripheral stalk is formed by the delta and b chains.

It is found in the cell membrane. In terms of biological role, key component of the proton channel; it plays a direct role in the translocation of protons across the membrane. The chain is ATP synthase subunit a from Desulforamulus reducens (strain ATCC BAA-1160 / DSM 100696 / MI-1) (Desulfotomaculum reducens).